The primary structure comprises 358 residues: Plastoglobulin-1, chloroplastic (358 aa).

The N-terminal 47 residues, Met-1–Ala-47, are a transit peptide targeting the chloroplast. Residues Ala-48–Phe-114 are disordered.

The protein belongs to the PAP/fibrillin family.

The protein localises to the plastid. It is found in the chloroplast. In terms of biological role, may form together with other plastoglobulins a coat on the surface of the lipoprotein particle. The coat may contain receptors for attachment to the thylakoid membrane as well as regulatory proteins that may function in the transfer of lipids to and from the thylakoid membranes. The polypeptide is Plastoglobulin-1, chloroplastic (PG1) (Pisum sativum (Garden pea)).